The chain runs to 587 residues: L-ascorbate oxidase (587 aa).

A signal peptide spans 1–33 (MAKVADKPFFPKPFLSFLVLSIIFGFGITLSEA). Plastocyanin-like domains lie at 38–157 (IKHY…LIVD) and 169–335 (DEEI…NYLP). Intrachain disulfides connect cysteine 54–cysteine 236, cysteine 116–cysteine 574, and cysteine 215–cysteine 228. Cu cation contacts are provided by histidine 95, histidine 97, histidine 139, and histidine 141. N-linked (GlcNAc...) asparagine glycosylation is found at asparagine 360, asparagine 401, and asparagine 475. The Plastocyanin-like 3 domain occupies 379-559 (NRRLFLLNTQ…HMGMGVVFAE (181 aa)). The Cu cation site is built by histidine 480, histidine 483, histidine 485, histidine 542, cysteine 543, histidine 544, histidine 548, and methionine 553.

This sequence belongs to the multicopper oxidase family. As to quaternary structure, dimer. The cofactor is Cu cation.

The protein localises to the secreted. The enzyme catalyses 4 L-ascorbate + O2 = 4 monodehydro-L-ascorbate radical + 2 H2O. May be involved in a redox system involving ascorbic acid. The protein is L-ascorbate oxidase of Cucumis sativus (Cucumber).